The primary structure comprises 428 residues: Probable 4-methylmuconolactone transporter (428 aa).

The Cytoplasmic segment spans residues 1–26 (MFAWYKAGSPQQKKTFWACYSGWALD). Residues 27–47 (SFDMQMFSFLLPALTLTWGLT) traverse the membrane as a helical segment. At 48–50 (KAE) the chain is on the periplasmic side. A helical transmembrane segment spans residues 51 to 71 (VGVLGTVALVVTAIGGWGAGI). Topologically, residues 72 to 80 (LSDRYGRAR) are cytoplasmic. The chain crosses the membrane as a helical span at residues 81 to 101 (ILVLAIIWFTLFGVLAGFAQS). Topologically, residues 102–110 (YQQLLIART) are periplasmic. A helical transmembrane segment spans residues 111-131 (LQGLGFGGEWAVGAALMAEVI). The Cytoplasmic segment spans residues 132–145 (DSRHRGKAIGFVQS). Residues 146 to 166 (GFALGWALAVVVATLLLAWLP) form a helical membrane-spanning segment. Position 167 (Lys-167) is a topological domain, periplasmic. A helical membrane pass occupies residues 168 to 188 (EMAWRVAFWSGIIPALIVLFI). At 189 to 227 (RRHVKDSSMFERARQSRAPRASLSSVFNRKYARTLALSS) the chain is on the cytoplasmic side. A helical transmembrane segment spans residues 228-248 (VLVIGLQAGCYAILVWLPSLL). Over 249-252 (NQRQ) the chain is Periplasmic. The chain crosses the membrane as a helical span at residues 253-273 (VAAGSMIVTVFIMAFGSFCGF). Residues 274 to 287 (AVTADLSDRIGRRP) are Cytoplasmic-facing. A helical transmembrane segment spans residues 288 to 308 (TLILLSVCAWIVTVSYMLLPL). At 309 to 314 (NTTLTA) the chain is on the periplasmic side. The helical transmembrane segment at 315–335 (ILGFLVGFSAIGMFAALGPFL) threads the bilayer. The Cytoplasmic segment spans residues 336–356 (SELFPTNVRTTCMGFAYNVGK). A helical membrane pass occupies residues 357 to 371 (SIGAGSVVGVGVLST). Residues 372–377 (HIGLAN) lie on the Periplasmic side of the membrane. A helical membrane pass occupies residues 378 to 398 (AMGTFCLVAYAFAVFGIMLLP). The Cytoplasmic segment spans residues 399-428 (ETRGIAIENIGEADAHSPAAPLAQPASARS).

It belongs to the major facilitator superfamily. Sugar transporter (TC 2.A.1.1) family.

It is found in the cell inner membrane. Probable uptake of 4-methylmuconolactone. This Cupriavidus pinatubonensis (strain JMP 134 / LMG 1197) (Cupriavidus necator (strain JMP 134)) protein is Probable 4-methylmuconolactone transporter.